Reading from the N-terminus, the 132-residue chain is Mite allergen Der p 5 (132 aa).

Immunodominant conformational IgE-binding epitope stretches follow at residues 25–53 (DYQNEFDFLLMERIHEQIKKGELALFYLQ) and 102–132 (EQYNLEMAKKSGDILERDLKKEEARVKKIEV).

Belongs to the mite group 5 allergen family. As to quaternary structure, monomer. Trimer of homodimers. Oligomerizes in a concentration-dependent manner.

In Dermatophagoides pteronyssinus (European house dust mite), this protein is Mite allergen Der p 5 (DERP5).